The following is a 465-amino-acid chain: Ribosome biogenesis protein YTM1 (465 aa).

The interval 18 to 99 (ARLRFSTRDE…ETTLDVEYVR (82 aa)) is ubiquitin-like (UBL) domain. WD repeat units follow at residues 111 to 153 (LHDD…IHTS), 160 to 198 (GHQS…KGIT), 205 to 242 (GHKG…SPAV), 277 to 317 (GHTA…LVDT), 319 to 358 (TTSH…TTVS), 364 to 404 (GHTN…TDTD), and 427 to 465 (GDGV…PKTA). The tract at residues 235–272 (KKSESPAVPQNLLPSSSARSSKRRKLNSSASTSQRGPL) is disordered.

Belongs to the WD repeat WDR12/YTM1 family. As to quaternary structure, component of the NOP7 complex, composed of ERB1, NOP7 and YTM1. The complex is held together by ERB1, which interacts with NOP7 via its N-terminal domain and with YTM1 via a high-affinity interaction between the seven-bladed beta-propeller domains of the 2 proteins. The NOP7 complex associates with the 66S pre-ribosome. Interacts (via UBL domain) with MDN1 (via VWFA/MIDAS domain).

It is found in the nucleus. It localises to the nucleolus. The protein resides in the nucleoplasm. Functionally, component of the NOP7 complex, which is required for maturation of the 25S and 5.8S ribosomal RNAs and formation of the 60S ribosome. This is Ribosome biogenesis protein YTM1 from Coccidioides immitis (strain RS) (Valley fever fungus).